The primary structure comprises 97 residues: Aspartyl/glutamyl-tRNA(Asn/Gln) amidotransferase subunit C (97 aa).

Belongs to the GatC family. Heterotrimer of A, B and C subunits.

It catalyses the reaction L-glutamyl-tRNA(Gln) + L-glutamine + ATP + H2O = L-glutaminyl-tRNA(Gln) + L-glutamate + ADP + phosphate + H(+). It carries out the reaction L-aspartyl-tRNA(Asn) + L-glutamine + ATP + H2O = L-asparaginyl-tRNA(Asn) + L-glutamate + ADP + phosphate + 2 H(+). Functionally, allows the formation of correctly charged Asn-tRNA(Asn) or Gln-tRNA(Gln) through the transamidation of misacylated Asp-tRNA(Asn) or Glu-tRNA(Gln) in organisms which lack either or both of asparaginyl-tRNA or glutaminyl-tRNA synthetases. The reaction takes place in the presence of glutamine and ATP through an activated phospho-Asp-tRNA(Asn) or phospho-Glu-tRNA(Gln). This chain is Aspartyl/glutamyl-tRNA(Asn/Gln) amidotransferase subunit C, found in Listeria monocytogenes serotype 4b (strain CLIP80459).